Reading from the N-terminus, the 150-residue chain is Urease accessory protein UreE (150 aa).

This sequence belongs to the UreE family.

It localises to the cytoplasm. Functionally, involved in urease metallocenter assembly. Binds nickel. Probably functions as a nickel donor during metallocenter assembly. This is Urease accessory protein UreE from Staphylococcus carnosus (strain TM300).